A 241-amino-acid polypeptide reads, in one-letter code: High mobility group B protein 7 (241 aa).

2 stretches are compositionally biased toward polar residues: residues 1-11 (MAGPSTTSNAP) and 20-29 (ETSSNTSTTL). Disordered stretches follow at residues 1-30 (MAGP…TTLR), 75-116 (TQAE…NKPK), and 174-241 (EYNK…LDDY). Over residues 77-90 (AEAKKKPAEKKKTT) the composition is skewed to basic and acidic residues. Positions 115–183 (PKRPLTAFFI…EYNKSLESND (69 aa)) form a DNA-binding region, HMG box. 2 stretches are compositionally biased toward acidic residues: residues 182-221 (NDAD…ENTD) and 229-241 (GKEE…LDDY).

It belongs to the HMGB family. Phosphorylated. As to expression, expressed at low levels in lateral roots, root tips, cotyledons, leaves and flowers (including pedicels, but excluding styles).

It localises to the nucleus. Functionally, binds preferentially double-stranded supercoiled DNA. Required for karyogamy during female gametophyte development, when the two polar nuclei fuse to form the diploid central cell nucleus. The protein is High mobility group B protein 7 (HMGB7) of Arabidopsis thaliana (Mouse-ear cress).